A 282-amino-acid polypeptide reads, in one-letter code: Orotidine 5'-phosphate decarboxylase (282 aa).

Lys-95 (proton donor) is an active-site residue.

This sequence belongs to the OMP decarboxylase family. Type 2 subfamily.

The enzyme catalyses orotidine 5'-phosphate + H(+) = UMP + CO2. The protein operates within pyrimidine metabolism; UMP biosynthesis via de novo pathway; UMP from orotate: step 2/2. The chain is Orotidine 5'-phosphate decarboxylase from Polaromonas naphthalenivorans (strain CJ2).